The primary structure comprises 291 residues: Ribosome maturation factor RimP (291 aa).

A disordered region spans residues 188–291 (ERGLGEDEEF…GGKPKAKETH (104 aa)). Residues 193 to 211 (EDEEFEDDADEVFEGDEAD) are compositionally biased toward acidic residues. Basic and acidic residues-rich tracts occupy residues 212 to 237 (EKAA…EKRA) and 245 to 254 (AKSEKAEKSQ).

The protein belongs to the RimP family.

Its subcellular location is the cytoplasm. Its function is as follows. Required for maturation of 30S ribosomal subunits. This Azorhizobium caulinodans (strain ATCC 43989 / DSM 5975 / JCM 20966 / LMG 6465 / NBRC 14845 / NCIMB 13405 / ORS 571) protein is Ribosome maturation factor RimP.